Here is a 329-residue protein sequence, read N- to C-terminus: Porphobilinogen deaminase (329 aa).

Cysteine 250 bears the S-(dipyrrolylmethanemethyl)cysteine mark.

The protein belongs to the HMBS family. As to quaternary structure, monomer. Dipyrromethane serves as cofactor.

It catalyses the reaction 4 porphobilinogen + H2O = hydroxymethylbilane + 4 NH4(+). It functions in the pathway porphyrin-containing compound metabolism; protoporphyrin-IX biosynthesis; coproporphyrinogen-III from 5-aminolevulinate: step 2/4. Its function is as follows. Tetrapolymerization of the monopyrrole PBG into the hydroxymethylbilane pre-uroporphyrinogen in several discrete steps. This chain is Porphobilinogen deaminase, found in Burkholderia mallei (strain NCTC 10247).